Here is a 167-residue protein sequence, read N- to C-terminus: Ion-translocating oxidoreductase complex subunit B (167 aa).

A hydrophobic region spans residues 1-22 (MITLIIFSFLSFLLGIILSFTA). Residues 28-87 (QEDPIVEIVNELLPQSQCAQCGYSGCYPYAKAIVENSEKINKCIPGGTDLISAISSVLSI) form the 4Fe-4S domain. Residues Cys-45, Cys-48, Cys-53, Cys-70, Cys-113, Cys-116, Cys-119, Cys-123, Cys-143, Cys-146, Cys-149, and Cys-153 each contribute to the [4Fe-4S] cluster site. 2 consecutive 4Fe-4S ferredoxin-type domains span residues 104 to 133 (NTVL…GAPN) and 134 to 163 (FIHT…IKKE).

It belongs to the 4Fe4S bacterial-type ferredoxin family. RnfB subfamily. In terms of assembly, the complex is composed of six subunits: RnfA, RnfB, RnfC, RnfD, RnfE and RnfG. The cofactor is [4Fe-4S] cluster.

It is found in the cell inner membrane. Its function is as follows. Part of a membrane-bound complex that couples electron transfer with translocation of ions across the membrane. This is Ion-translocating oxidoreductase complex subunit B from Buchnera aphidicola subsp. Acyrthosiphon pisum (strain Tuc7).